The chain runs to 305 residues: Plant-type L-asparaginase (305 aa).

Thr-175 acts as the Nucleophile in catalysis. Residues 202-205 (RVGD) and 224-227 (TGLG) each bind substrate.

It belongs to the Ntn-hydrolase family. Heterotetramer of two alpha and two beta chains arranged as a dimer of alpha/beta heterodimers. In terms of processing, autocleaved. Generates the alpha and beta subunits. The N-terminal residue of the beta subunit is thought to be responsible for the nucleophile hydrolase activity.

The catalysed reaction is L-asparagine + H2O = L-aspartate + NH4(+). Functionally, catalyzes the hydrolysis of L-asparagine into L-aspartate and ammonia. This Pyrococcus horikoshii (strain ATCC 700860 / DSM 12428 / JCM 9974 / NBRC 100139 / OT-3) protein is Plant-type L-asparaginase.